A 99-amino-acid polypeptide reads, in one-letter code: Large ribosomal subunit protein bL27 (99 aa).

Residues Met1 to Phe9 constitute a propeptide that is removed on maturation.

The protein belongs to the bacterial ribosomal protein bL27 family. Post-translationally, the N-terminus is cleaved by ribosomal processing cysteine protease Prp.

This chain is Large ribosomal subunit protein bL27, found in Clostridium botulinum (strain Alaska E43 / Type E3).